The primary structure comprises 223 residues: 7-cyano-7-deazaguanine synthase (223 aa).

15-25 (FSGGQDSTTCL) contributes to the ATP binding site. Residues C191, C200, C203, and C206 each coordinate Zn(2+).

This sequence belongs to the QueC family. In terms of assembly, homodimer. The cofactor is Zn(2+).

The catalysed reaction is 7-carboxy-7-deazaguanine + NH4(+) + ATP = 7-cyano-7-deazaguanine + ADP + phosphate + H2O + H(+). Its pathway is purine metabolism; 7-cyano-7-deazaguanine biosynthesis. Its function is as follows. Catalyzes the ATP-dependent conversion of 7-carboxy-7-deazaguanine (CDG) to 7-cyano-7-deazaguanine (preQ(0)). This is 7-cyano-7-deazaguanine synthase from Staphylococcus saprophyticus subsp. saprophyticus (strain ATCC 15305 / DSM 20229 / NCIMB 8711 / NCTC 7292 / S-41).